The sequence spans 429 residues: Histidine--tRNA ligase (429 aa).

The protein belongs to the class-II aminoacyl-tRNA synthetase family. Homodimer.

The protein resides in the cytoplasm. It catalyses the reaction tRNA(His) + L-histidine + ATP = L-histidyl-tRNA(His) + AMP + diphosphate + H(+). The chain is Histidine--tRNA ligase from Rippkaea orientalis (strain PCC 8801 / RF-1) (Cyanothece sp. (strain PCC 8801)).